The following is a 315-amino-acid chain: MSVKHIQDNSNQEIAARIIQRAWKTFLNVSVYQHFKSLIDLRRQGEPRQIVRYINPKEAQLLDAAAGVQVRFRLGGVRFPPEIYYKIFTHRHIEDLCANSPRDYTKLPARYTSHNKDDPPQVEDNSGWYRRVENNGWRPVSYRFWMPLESGVVDSTKESEFHFSKLKRKQDLEKKRKIKKIDWMRQMYYMGSLEAKATDNETLGLIHKATKGLIKSIEDGGVDSVMEWEVDEVLNWTNTLNFDEYIASWRETATSNSSANLKDVKLQRIQKSLQSNIYGDEAKQAEESLYDDSTYYENAYTKQFTRLTPDSMFGM.

As to quaternary structure, can homodimerize. Interacts with MFF; the interaction inhibits MFF interaction with DNM1L. Enriched in the pancreatic beta cell and the testis and is expressed at low levels in other tissues tested.

It is found in the cytoplasm. It localises to the cytosol. The protein resides in the mitochondrion outer membrane. In terms of biological role, acts as an inhibitor of mitochondrial fission. Interacts with MFF and prevents DNM1L recruitment to mitochondria, promoting a more fused mitochondrial network. This is Protein MFI from Mus musculus (Mouse).